We begin with the raw amino-acid sequence, 253 residues long: Imidazole glycerol phosphate synthase subunit HisF (253 aa).

Active-site residues include Asp11 and Asp130.

The protein belongs to the HisA/HisF family. As to quaternary structure, heterodimer of HisH and HisF.

The protein resides in the cytoplasm. It catalyses the reaction 5-[(5-phospho-1-deoxy-D-ribulos-1-ylimino)methylamino]-1-(5-phospho-beta-D-ribosyl)imidazole-4-carboxamide + L-glutamine = D-erythro-1-(imidazol-4-yl)glycerol 3-phosphate + 5-amino-1-(5-phospho-beta-D-ribosyl)imidazole-4-carboxamide + L-glutamate + H(+). It participates in amino-acid biosynthesis; L-histidine biosynthesis; L-histidine from 5-phospho-alpha-D-ribose 1-diphosphate: step 5/9. Its function is as follows. IGPS catalyzes the conversion of PRFAR and glutamine to IGP, AICAR and glutamate. The HisF subunit catalyzes the cyclization activity that produces IGP and AICAR from PRFAR using the ammonia provided by the HisH subunit. This is Imidazole glycerol phosphate synthase subunit HisF from Acidobacterium capsulatum (strain ATCC 51196 / DSM 11244 / BCRC 80197 / JCM 7670 / NBRC 15755 / NCIMB 13165 / 161).